Here is a 281-residue protein sequence, read N- to C-terminus: NADPH-dependent 7-cyano-7-deazaguanine reductase (281 aa).

87-89 (IES) is a binding site for substrate. 89-90 (SK) lines the NADPH pocket. Residue C188 is the Thioimide intermediate of the active site. The active-site Proton donor is the D195. 227-228 (HE) provides a ligand contact to substrate. 256–257 (RG) lines the NADPH pocket. Residues 261–281 (INPYRSTEQAKPDHNHRMARQ) are disordered. Residues 268–281 (EQAKPDHNHRMARQ) show a composition bias toward basic and acidic residues.

This sequence belongs to the GTP cyclohydrolase I family. QueF type 2 subfamily. In terms of assembly, homodimer.

Its subcellular location is the cytoplasm. It carries out the reaction 7-aminomethyl-7-carbaguanine + 2 NADP(+) = 7-cyano-7-deazaguanine + 2 NADPH + 3 H(+). The protein operates within tRNA modification; tRNA-queuosine biosynthesis. Catalyzes the NADPH-dependent reduction of 7-cyano-7-deazaguanine (preQ0) to 7-aminomethyl-7-deazaguanine (preQ1). The protein is NADPH-dependent 7-cyano-7-deazaguanine reductase of Vibrio vulnificus (strain YJ016).